Here is a 247-residue protein sequence, read N- to C-terminus: Probable transcriptional regulatory protein MS0710 (247 aa).

This sequence belongs to the TACO1 family.

It is found in the cytoplasm. The polypeptide is Probable transcriptional regulatory protein MS0710 (Mannheimia succiniciproducens (strain KCTC 0769BP / MBEL55E)).